We begin with the raw amino-acid sequence, 241 residues long: Phosphoribosylaminoimidazole-succinocarboxamide synthase (241 aa).

The protein belongs to the SAICAR synthetase family.

The enzyme catalyses 5-amino-1-(5-phospho-D-ribosyl)imidazole-4-carboxylate + L-aspartate + ATP = (2S)-2-[5-amino-1-(5-phospho-beta-D-ribosyl)imidazole-4-carboxamido]succinate + ADP + phosphate + 2 H(+). It participates in purine metabolism; IMP biosynthesis via de novo pathway; 5-amino-1-(5-phospho-D-ribosyl)imidazole-4-carboxamide from 5-amino-1-(5-phospho-D-ribosyl)imidazole-4-carboxylate: step 1/2. This chain is Phosphoribosylaminoimidazole-succinocarboxamide synthase (purC), found in Bacillus subtilis (strain 168).